The sequence spans 1529 residues: Slit homolog 2 protein (1529 aa).

The first 30 residues, 1-30 (MRGVGWQMLSLSLGLVLAILNKVAPQACPA), serve as a signal peptide directing secretion. The region spanning 31 to 55 (QCSCSGSTVDCHGLALRSVPRNIPR) is the LRRNT domain. LRR repeat units follow at residues 56–77 (NTER…DFAG), 80–101 (HLRV…AFQD), 104–125 (ELER…LFLG), 128–149 (KLYR…AFRG), 152–173 (DIKN…AFRA), and 176–197 (DLEV…SFNH). N-linked (GlcNAc...) asparagine glycosylation occurs at Asn-66. The N-linked (GlcNAc...) asparagine glycan is linked to Asn-186. An LRRCT 1 domain is found at 209-259 (NNLYCDCHLAWLSDWLRQRPRVGLYTQCMGPSHLRGHNVAEVQKREFVCSG). The region spanning 264–300 (MAPSCSVLHCPAACTCSNNIVDCRGKGLTEIPTNLPE) is the LRRNT 2 domain. The cysteines at positions 277 and 286 are disulfide-linked. 5 LRR repeats span residues 301 to 322 (TITE…AFSP), 325 to 346 (KLRR…AFQG), 349 to 370 (SLNS…LFEG), 373 to 394 (SLQL…AFQD), and 397 to 418 (NLNL…TFSP). An LRRCT 2 domain is found at 430-480 (NPFICDCHLKWLADYLHTNPIETSGARCTSPRRLANKRIGQIKSKKFRCSA). 4 disulfides stabilise this stretch: Cys-434–Cys-457, Cys-436–Cys-478, Cys-506–Cys-512, and Cys-510–Cys-519. Residues 497–533 (SGDCFADLACPEKCRCEGTTVDCSNQKLNKIPEHIPQ) form the LRRNT 3 domain. 5 LRR repeats span residues 534–555 (YTAE…GIFK), 559–580 (QLRK…AFEG), 583–604 (GVNE…MFKG), 607–628 (SLKT…SFIG), and 631–652 (SVRL…AFDT). Asn-564 is a glycosylation site (N-linked (GlcNAc...) asparagine). Asn-623 carries an N-linked (GlcNAc...) asparagine glycan. An LRRCT 3 domain is found at 664 to 714 (NPFNCNCYLAWLGEWLRKKRIVTGNPRCQKPYFLKEIPIQDVAIQDFTCDD). Cystine bridges form between Cys-668–Cys-691, Cys-670–Cys-712, Cys-727–Cys-733, and Cys-731–Cys-740. Residues 718–754 (DNSCSPLSRCPTECTCLDTVVRCSNKGLKVLPKGIPR) form the LRRNT 4 domain. LRR repeat units lie at residues 755–777 (DVTE…SNYK), 778–799 (HLTL…SFSN), 802–823 (QLLT…TFDG), and 826–847 (SLRL…AFND). N-linked (GlcNAc...) asparagine glycosylation is found at Asn-794 and Asn-799. The LRRCT 4 domain maps to 859–909 (NPLYCDCNMQWLSDWVKSEYKEPGIARCAGPGEMADKLLLTTPSKKFTCQG). Intrachain disulfides connect Cys-863-Cys-886, Cys-865-Cys-907, Cys-922-Cys-933, Cys-927-Cys-943, Cys-945-Cys-954, Cys-961-Cys-972, Cys-966-Cys-984, Cys-986-Cys-995, Cys-1002-Cys-1013, Cys-1007-Cys-1022, Cys-1024-Cys-1033, Cys-1040-Cys-1053, Cys-1047-Cys-1062, Cys-1064-Cys-1073, Cys-1080-Cys-1091, Cys-1085-Cys-1100, Cys-1102-Cys-1111, Cys-1125-Cys-1136, Cys-1130-Cys-1145, and Cys-1147-Cys-1156. EGF-like domains are found at residues 918–955 (KCNP…QDCD) and 957–996 (PIHA…ENCE). The EGF-like 3; calcium-binding domain occupies 998-1034 (NVDDCEDNDCENNSTCVDGINNYTCLCPPEYTGELCE). Residues Asn-1009, Asn-1010, and Asn-1019 are each glycosylated (N-linked (GlcNAc...) asparagine). Residues 1036–1074 (KLDFCAQDLNPCQHDSKCILTPKGFKCDCTPGYVGEHCD) enclose the EGF-like 4 domain. The region spanning 1076–1112 (DFDDCQDNKCKNGAHCTDAVNGYTCICPEGYSGLFCE) is the EGF-like 5; calcium-binding domain. An EGF-like 6 domain is found at 1121 to 1157 (RTSPCDNFDCQNGAQCIVRINEPICQCLPGYQGEKCE). One can recognise a Laminin G-like domain in the interval 1160 to 1333 (VSVNFINKES…PMQTGILPGC (174 aa)). N-linked (GlcNAc...) asparagine glycosylation is found at Asn-1183, Asn-1266, and Asn-1300. 14 disulfide bridges follow: Cys-1307/Cys-1333, Cys-1336/Cys-1346, Cys-1341/Cys-1356, Cys-1358/Cys-1367, Cys-1375/Cys-1385, Cys-1380/Cys-1395, Cys-1397/Cys-1406, Cys-1416/Cys-1426, Cys-1421/Cys-1436, Cys-1438/Cys-1447, Cys-1453/Cys-1492, Cys-1471/Cys-1506, Cys-1482/Cys-1522, and Cys-1486/Cys-1524. The region spanning 1332–1368 (GCEPCHKKVCAHGTCQPSSQAGFTCECQEGWMGPLCD) is the EGF-like 7 domain. The region spanning 1453–1528 (CRGERIRDYY…VVKCGCTRCV (76 aa)) is the CTCK domain.

As to quaternary structure, interacts with GREM1. Homodimer. Binds ROBO1 and ROBO2 with high affinity. In terms of tissue distribution, fetal lung and kidney, and adult spinal cord. Weak expression in adult adrenal gland, thyroid, trachea and other tissues examined.

It localises to the secreted. Thought to act as molecular guidance cue in cellular migration, and function appears to be mediated by interaction with roundabout homolog receptors. During neural development involved in axonal navigation at the ventral midline of the neural tube and projection of axons to different regions. SLIT1 and SLIT2 seem to be essential for midline guidance in the forebrain by acting as repulsive signal preventing inappropriate midline crossing by axons projecting from the olfactory bulb. In spinal cord development may play a role in guiding commissural axons once they reached the floor plate by modulating the response to netrin. In vitro, silences the attractive effect of NTN1 but not its growth-stimulatory effect and silencing requires the formation of a ROBO1-DCC complex. May be implicated in spinal cord midline post-crossing axon repulsion. In vitro, only commissural axons that crossed the midline responded to SLIT2. In the developing visual system appears to function as repellent for retinal ganglion axons by providing a repulsion that directs these axons along their appropriate paths prior to, and after passage through, the optic chiasm. In vitro, collapses and repels retinal ganglion cell growth cones. Seems to play a role in branching and arborization of CNS sensory axons, and in neuronal cell migration. In vitro, Slit homolog 2 protein N-product, but not Slit homolog 2 protein C-product, repels olfactory bulb (OB) but not dorsal root ganglia (DRG) axons, induces OB growth cones collapse and induces branching of DRG axons. Seems to be involved in regulating leukocyte migration. This chain is Slit homolog 2 protein (SLIT2), found in Homo sapiens (Human).